The chain runs to 144 residues: Glycine-rich protein HC1 (144 aa).

The chain crosses the membrane as a helical span at residues 5–25; sequence IFLLLGLSIAFAILISSEVAA. A run of 11 repeats spans residues 37 to 42, 43 to 48, 50 to 55, 56 to 61, 63 to 68, 69 to 74, 76 to 81, 82 to 87, 89 to 94, 102 to 107, and 108 to 113. Positions 37 to 113 are 11 X 6 AA tandem repeats of G-Y-[NH]-N-G -G; it reads GYNNGGGYHN…NNGGGYHGGG (77 aa).

This sequence belongs to the GRP family.

It is found in the membrane. The sequence is that of Glycine-rich protein HC1 from Oxybasis rubra (Red goosefoot).